A 491-amino-acid chain; its full sequence is Probable aspartyl aminopeptidase (491 aa).

H90 lines the Zn(2+) pocket. H168 contacts substrate. D278 serves as a coordination point for Zn(2+). E315 provides a ligand contact to substrate. Residues E316 and D361 each coordinate Zn(2+). Substrate contacts are provided by D361, H364, K389, and Y396. H455 is a binding site for Zn(2+).

This sequence belongs to the peptidase M18 family. As to quaternary structure, tetrahedron-shaped homododecamer built from six homodimers. The cofactor is Zn(2+).

The protein resides in the cytoplasm. It carries out the reaction Release of an N-terminal aspartate or glutamate from a peptide, with a preference for aspartate.. Likely to play an important role in intracellular protein and peptide metabolism. The chain is Probable aspartyl aminopeptidase from Ricinus communis (Castor bean).